We begin with the raw amino-acid sequence, 150 residues long: Transcriptional regulator MraZ (150 aa).

SpoVT-AbrB domains are found at residues 7–58 and 87–130; these read KEQH…EPEI and LDSV…SPEK.

It belongs to the MraZ family. Forms oligomers.

The protein resides in the cytoplasm. The protein localises to the nucleoid. In Chlorobium phaeobacteroides (strain BS1), this protein is Transcriptional regulator MraZ.